We begin with the raw amino-acid sequence, 275 residues long: uncharacterized protein (275 aa).

[4Fe-4S] cluster-binding residues include C97, C102, C136, and C140. C140 is a siroheme binding site.

Belongs to the nitrite and sulfite reductase 4Fe-4S domain family.

This is an uncharacterized protein from Methanocaldococcus jannaschii (strain ATCC 43067 / DSM 2661 / JAL-1 / JCM 10045 / NBRC 100440) (Methanococcus jannaschii).